A 544-amino-acid chain; its full sequence is CTP synthase (544 aa).

The amidoligase domain stretch occupies residues 1 to 265 (MTKFIFVTGG…DNIITEQLQL (265 aa)). A CTP-binding site is contributed by serine 13. Residue serine 13 coordinates UTP. Residues 14–19 (SLGKGI) and aspartate 71 contribute to the ATP site. 2 residues coordinate Mg(2+): aspartate 71 and glutamate 139. CTP-binding positions include 146–148 (DIE), 186–191 (KTKPTQ), and lysine 222. Residues 186 to 191 (KTKPTQ) and lysine 222 each bind UTP. The Glutamine amidotransferase type-1 domain occupies 290 to 544 (KIAMVGKYVD…VKAALNNKKA (255 aa)). Glycine 353 provides a ligand contact to L-glutamine. Residue cysteine 380 is the Nucleophile; for glutamine hydrolysis of the active site. L-glutamine-binding positions include 381–384 (LGMQ), glutamate 404, and arginine 471. Active-site residues include histidine 517 and glutamate 519.

Belongs to the CTP synthase family. In terms of assembly, homotetramer.

The enzyme catalyses UTP + L-glutamine + ATP + H2O = CTP + L-glutamate + ADP + phosphate + 2 H(+). It catalyses the reaction L-glutamine + H2O = L-glutamate + NH4(+). It carries out the reaction UTP + NH4(+) + ATP = CTP + ADP + phosphate + 2 H(+). It participates in pyrimidine metabolism; CTP biosynthesis via de novo pathway; CTP from UDP: step 2/2. With respect to regulation, allosterically activated by GTP, when glutamine is the substrate; GTP has no effect on the reaction when ammonia is the substrate. The allosteric effector GTP functions by stabilizing the protein conformation that binds the tetrahedral intermediate(s) formed during glutamine hydrolysis. Inhibited by the product CTP, via allosteric rather than competitive inhibition. Its function is as follows. Catalyzes the ATP-dependent amination of UTP to CTP with either L-glutamine or ammonia as the source of nitrogen. Regulates intracellular CTP levels through interactions with the four ribonucleotide triphosphates. The sequence is that of CTP synthase from Neisseria gonorrhoeae (strain ATCC 700825 / FA 1090).